We begin with the raw amino-acid sequence, 167 residues long: Putative peroxiredoxin-A (167 aa).

Residues 4–167 enclose the Thioredoxin domain; the sequence is IKRGDRFPTT…STAQKIIAKL (164 aa). C53 acts as the Cysteine sulfenic acid (-SOH) intermediate in catalysis. Residues 165 to 167 carry the Microbody targeting signal motif; sequence AKL.

It belongs to the peroxiredoxin family. Prx5 subfamily.

Its subcellular location is the peroxisome membrane. It catalyses the reaction a hydroperoxide + [thioredoxin]-dithiol = an alcohol + [thioredoxin]-disulfide + H2O. Its function is as follows. Thiol-specific peroxidase that catalyzes the reduction of hydrogen peroxide and organic hydroperoxides to water and alcohols, respectively. Plays a role in cell protection against oxidative stress by detoxifying peroxides and as sensor of hydrogen peroxide-mediated signaling events. This Candida boidinii (Yeast) protein is Putative peroxiredoxin-A (PMPA).